The chain runs to 868 residues: Leucine--tRNA ligase (868 aa).

Positions 42-52 match the 'HIGH' region motif; sequence PYPSGKLHMGH. A 'KMSKS' region motif is present at residues 627–631; the sequence is KMSKS. Lys630 lines the ATP pocket.

This sequence belongs to the class-I aminoacyl-tRNA synthetase family.

It is found in the cytoplasm. The enzyme catalyses tRNA(Leu) + L-leucine + ATP = L-leucyl-tRNA(Leu) + AMP + diphosphate. This chain is Leucine--tRNA ligase, found in Pseudomonas savastanoi pv. phaseolicola (strain 1448A / Race 6) (Pseudomonas syringae pv. phaseolicola (strain 1448A / Race 6)).